Here is a 147-residue protein sequence, read N- to C-terminus: Sulfur acceptor protein CsdE (147 aa).

Residue Cys61 is the Cysteine persulfide intermediate of the active site. At Cys61 the chain carries Cysteine persulfide.

This sequence belongs to the SufE family. Homodimer. Forms a heterodimer with CsdA. Interacts with CsdA and with TcdA/CsdL.

In terms of biological role, stimulates the cysteine desulfurase activity of CsdA. Contains a cysteine residue (Cys-61) that acts to accept sulfur liberated via the desulfurase activity of CsdA. May be able to transfer sulfur to TcdA/CsdL. Seems to support the function of TcdA in the generation of cyclic threonylcarbamoyladenosine at position 37 (ct(6)A37) in tRNAs that read codons beginning with adenine. Does not appear to participate in Fe/S biogenesis. In Escherichia coli (strain K12), this protein is Sulfur acceptor protein CsdE (csdE).